The chain runs to 164 residues: UPF0262 protein Saro_0143 (164 aa).

This sequence belongs to the UPF0262 family.

The protein is UPF0262 protein Saro_0143 of Novosphingobium aromaticivorans (strain ATCC 700278 / DSM 12444 / CCUG 56034 / CIP 105152 / NBRC 16084 / F199).